Here is a 429-residue protein sequence, read N- to C-terminus: Histidinol dehydrogenase (429 aa).

Positions 130, 191, and 214 each coordinate NAD(+). Ser237, Gln259, and His262 together coordinate substrate. Positions 259 and 262 each coordinate Zn(2+). Catalysis depends on proton acceptor residues Glu327 and His328. Positions 328, 361, 415, and 420 each coordinate substrate. Asp361 serves as a coordination point for Zn(2+). His420 provides a ligand contact to Zn(2+).

The protein belongs to the histidinol dehydrogenase family. Requires Zn(2+) as cofactor.

The catalysed reaction is L-histidinol + 2 NAD(+) + H2O = L-histidine + 2 NADH + 3 H(+). Its pathway is amino-acid biosynthesis; L-histidine biosynthesis; L-histidine from 5-phospho-alpha-D-ribose 1-diphosphate: step 9/9. Its function is as follows. Catalyzes the sequential NAD-dependent oxidations of L-histidinol to L-histidinaldehyde and then to L-histidine. The polypeptide is Histidinol dehydrogenase (Nitrobacter winogradskyi (strain ATCC 25391 / DSM 10237 / CIP 104748 / NCIMB 11846 / Nb-255)).